Consider the following 326-residue polypeptide: rRNA 2'-O-methyltransferase fibrillarin (326 aa).

Positions 1–84 (MAFQPGSRGG…GGARGGAKGG (84 aa)) are disordered. Gly residues predominate over residues 7–83 (SRGGRGGARG…RGGARGGAKG (77 aa)). 18 positions are modified to asymmetric dimethylarginine: R8, R11, R15, R19, R23, R26, R32, R36, R39, R45, R49, R55, R59, R63, R67, R71, R74, and R78. S-adenosyl-L-methionine is bound by residues 180 to 181 (TS), 199 to 200 (EF), 224 to 225 (DA), and 244 to 247 (DVAQ).

It belongs to the methyltransferase superfamily. Fibrillarin family. As to quaternary structure, component of box C/D small nucleolar ribonucleoprotein (snoRNP) particles that contain SNU13, NOP1, SIK1/NOP56 and NOP58, plus a guide RNA. Post-translationally, by homology to other fibrillarins, some or all of the N-terminal domain arginines are modified to asymmetric dimethylarginine (DMA).

It localises to the nucleus. It is found in the nucleolus. It carries out the reaction L-glutaminyl-[histone H2A] + S-adenosyl-L-methionine = N(5)-methyl-L-glutaminyl-[histone H2A] + S-adenosyl-L-homocysteine + H(+). In terms of biological role, S-adenosyl-L-methionine-dependent methyltransferase that has the ability to methylate both RNAs and proteins. Involved in pre-rRNA processing. Utilizes the methyl donor S-adenosyl-L-methionine to catalyze the site-specific 2'-hydroxyl methylation of ribose moieties in pre-ribosomal RNA. Site specificity is provided by a guide RNA that base pairs with the substrate. Methylation occurs at a characteristic distance from the sequence involved in base pairing with the guide RNA. Also acts as a protein methyltransferase by mediating methylation of 'Gln-105' of histone H2A (H2AQ105me), a modification that impairs binding of the FACT complex and is specifically present at 35S ribosomal DNA locus. The protein is rRNA 2'-O-methyltransferase fibrillarin (NOP1) of Eremothecium gossypii (strain ATCC 10895 / CBS 109.51 / FGSC 9923 / NRRL Y-1056) (Yeast).